Reading from the N-terminus, the 70-residue chain is MNFLAAAIAAGLAAFAASYGNGKVISKTIESMARQPELSAQLRSTMFIGVGLIEAVPILSIVVSFLILFS.

2 helical membrane-spanning segments follow: residues 1 to 21 (MNFL…SYGN) and 47 to 67 (FIGV…SFLI).

Belongs to the ATPase C chain family. As to quaternary structure, F-type ATPases have 2 components, F(1) - the catalytic core - and F(0) - the membrane proton channel. F(1) has five subunits: alpha(3), beta(3), gamma(1), delta(1), epsilon(1). F(0) has three main subunits: a(1), b(2) and c(10-14). The alpha and beta chains form an alternating ring which encloses part of the gamma chain. F(1) is attached to F(0) by a central stalk formed by the gamma and epsilon chains, while a peripheral stalk is formed by the delta and b chains.

The protein resides in the cell membrane. Functionally, f(1)F(0) ATP synthase produces ATP from ADP in the presence of a proton or sodium gradient. F-type ATPases consist of two structural domains, F(1) containing the extramembraneous catalytic core and F(0) containing the membrane proton channel, linked together by a central stalk and a peripheral stalk. During catalysis, ATP synthesis in the catalytic domain of F(1) is coupled via a rotary mechanism of the central stalk subunits to proton translocation. Its function is as follows. Key component of the F(0) channel; it plays a direct role in translocation across the membrane. A homomeric c-ring of between 10-14 subunits forms the central stalk rotor element with the F(1) delta and epsilon subunits. The protein is ATP synthase subunit c of Latilactobacillus sakei subsp. sakei (strain 23K) (Lactobacillus sakei subsp. sakei).